A 622-amino-acid polypeptide reads, in one-letter code: Low affinity potassium transport system protein Kup (622 aa).

Transmembrane regions (helical) follow at residues 9–29 (LPAITLAAIGVVYGDIGTSPL), 49–69 (VFGFLSLIFWLLIFVVSIKYL), 103–123 (VIMGLIGGSFFYGEVVITPAI), 137–157 (PQLDTWIVPLSIIVLTLLFMI), 165–185 (VGQLFAPIMLTWFLILAGLGL), 213–233 (VSFIALGAVVLSITGVEALYA), 247–267 (WFTVVLPSLTLNYFGQGALLL), 276–296 (PFFLLAPDWALIPLLIIAALA), 337–357 (IYIPFVNWMLYVAVVIVIVSF), 363–383 (LAAAYGIAVTGTMVLTSILST), 396–416 (FVALILIAFLCVDIPLFTANL), and 419–439 (LLSGGWLPLSLGTVMFIVMTT).

It belongs to the HAK/KUP transporter (TC 2.A.72) family.

The protein resides in the cell inner membrane. It carries out the reaction K(+)(in) + H(+)(in) = K(+)(out) + H(+)(out). Functionally, responsible for the low-affinity transport of potassium into the cell. Likely operates as a K(+):H(+) symporter. The chain is Low affinity potassium transport system protein Kup from Escherichia coli O6:K15:H31 (strain 536 / UPEC).